The chain runs to 206 residues: Protein GrpE (206 aa).

Residues 1 to 17 (MSNESIKAEQDLIHEGV) show a composition bias toward basic and acidic residues. The disordered stretch occupies residues 1–20 (MSNESIKAEQDLIHEGVESE).

It belongs to the GrpE family. Homodimer.

The protein resides in the cytoplasm. In terms of biological role, participates actively in the response to hyperosmotic and heat shock by preventing the aggregation of stress-denatured proteins, in association with DnaK and GrpE. It is the nucleotide exchange factor for DnaK and may function as a thermosensor. Unfolded proteins bind initially to DnaJ; upon interaction with the DnaJ-bound protein, DnaK hydrolyzes its bound ATP, resulting in the formation of a stable complex. GrpE releases ADP from DnaK; ATP binding to DnaK triggers the release of the substrate protein, thus completing the reaction cycle. Several rounds of ATP-dependent interactions between DnaJ, DnaK and GrpE are required for fully efficient folding. This Shewanella oneidensis (strain ATCC 700550 / JCM 31522 / CIP 106686 / LMG 19005 / NCIMB 14063 / MR-1) protein is Protein GrpE.